The following is a 677-amino-acid chain: Protein asunder (677 aa).

Residues 515–540 (RLKLSKAKDQYRLLYRELEQLIQLNS) adopt a coiled-coil conformation. A compositionally biased stretch (low complexity) spans 578 to 598 (ESPLSPERLEPTSSSSSNSLL). The segment at 578–604 (ESPLSPERLEPTSSSSSNSLLKARKRR) is disordered. Residues 598-604 (LKARKRR) carry the Nuclear localization signal (NLS) motif.

This sequence belongs to the Integrator subunit 13 family. As to quaternary structure, belongs to the multiprotein complex Integrator, at least composed of IntS1, IntS2, IntS3, IntS4, omd/IntS5, IntS6, defl/IntS7, IntS8, IntS9, IntS10, IntS11, IntS12, asun/IntS13, IntS14 and IntS15. The core complex associates with protein phosphatase 2A subunits mts/PP2A and Pp2A-29B, to form the Integrator-PP2A (INTAC) complex. Phosphorylated.

The protein localises to the nucleus. The protein resides in the cytoplasm. It localises to the perinuclear region. In terms of biological role, component of the integrator complex, a multiprotein complex that terminates RNA polymerase II (Pol II) transcription in the promoter-proximal region of genes. The integrator complex provides a quality checkpoint during transcription elongation by driving premature transcription termination of transcripts that are unfavorably configured for transcriptional elongation: the complex terminates transcription by (1) catalyzing dephosphorylation of the C-terminal domain (CTD) of Pol II subunit Polr2A/Rbp1 and Spt5, and (2) degrading the exiting nascent RNA transcript via endonuclease activity. The integrator complex is also involved in the 3'-end processing of the U7 snRNA, and also the spliceosomal snRNAs U1, U2, U4 and U5. The polypeptide is Protein asunder (asun) (Drosophila willistoni (Fruit fly)).